The chain runs to 433 residues: ATP-dependent protease ATPase subunit HslU (433 aa).

Residues V18, G60–E65, D246, E311, and R383 each bind ATP.

It belongs to the ClpX chaperone family. HslU subfamily. As to quaternary structure, a double ring-shaped homohexamer of HslV is capped on each side by a ring-shaped HslU homohexamer. The assembly of the HslU/HslV complex is dependent on binding of ATP.

Its subcellular location is the cytoplasm. Functionally, ATPase subunit of a proteasome-like degradation complex; this subunit has chaperone activity. The binding of ATP and its subsequent hydrolysis by HslU are essential for unfolding of protein substrates subsequently hydrolyzed by HslV. HslU recognizes the N-terminal part of its protein substrates and unfolds these before they are guided to HslV for hydrolysis. The polypeptide is ATP-dependent protease ATPase subunit HslU (Rhodopseudomonas palustris (strain TIE-1)).